We begin with the raw amino-acid sequence, 574 residues long: Sulfate adenylyltransferase (574 aa).

The interval 1–169 is N-terminal; sequence MANTPHGGVL…LEAVNKLNHY (169 aa). The interval 170-394 is catalytic; that stretch reads DYVGLRYTPA…LRESSPPRAL (225 aa). Position 197 (Q197) interacts with sulfate. ATP-binding positions include 197–200 and 291–294; these read QTRN and GRDH. Active-site residues include T198, R199, and N200. R199 serves as a coordination point for sulfate. A295 contacts sulfate. V333 contacts ATP. The allosteric regulation domain; adenylyl-sulfate kinase-like stretch occupies residues 395–574; sequence QGFTIFLTGY…LESEGYFERL (180 aa). Residues 434–437, R451, 477–478, and R516 each bind 3'-phosphoadenylyl sulfate; these read DTVR and IA.

The protein in the N-terminal section; belongs to the sulfate adenylyltransferase family. This sequence in the C-terminal section; belongs to the APS kinase family. As to quaternary structure, homohexamer. Dimer of trimers.

It is found in the cytoplasm. It catalyses the reaction sulfate + ATP + H(+) = adenosine 5'-phosphosulfate + diphosphate. Its pathway is sulfur metabolism; hydrogen sulfide biosynthesis; sulfite from sulfate: step 1/3. With respect to regulation, allosterically inhibited by 3'-phosphoadenosine 5'-phosphosulfate (PAPS). In terms of biological role, catalyzes the first intracellular reaction of sulfate assimilation, forming adenosine-5'-phosphosulfate (APS) from inorganic sulfate and ATP. Plays an important role in sulfate activation as a component of the biosynthesis pathway of sulfur-containing amino acids. In Emericella nidulans (strain FGSC A4 / ATCC 38163 / CBS 112.46 / NRRL 194 / M139) (Aspergillus nidulans), this protein is Sulfate adenylyltransferase.